The chain runs to 148 residues: uncharacterized protein (148 aa).

Residues 3-64 enclose the HTH asnC-type domain; the sequence is LDALDRKILE…KLNYESIGYD (62 aa). Residues 22 to 41 constitute a DNA-binding region (H-T-H motif); it reads YREIAKDLNVAVGTIYNRIK.

This is an uncharacterized protein from Pyrococcus horikoshii (strain ATCC 700860 / DSM 12428 / JCM 9974 / NBRC 100139 / OT-3).